Reading from the N-terminus, the 389-residue chain is Succinate--CoA ligase [ADP-forming] subunit beta (389 aa).

In terms of domain architecture, ATP-grasp spans lysine 9 to glutamate 244. Residues lysine 46, glycine 53–glycine 55, glutamate 99, alanine 102, and glutamate 107 each bind ATP. Mg(2+) is bound by residues asparagine 199 and aspartate 213. Substrate is bound by residues asparagine 264 and glycine 321–valine 323.

This sequence belongs to the succinate/malate CoA ligase beta subunit family. Heterotetramer of two alpha and two beta subunits. It depends on Mg(2+) as a cofactor.

It carries out the reaction succinate + ATP + CoA = succinyl-CoA + ADP + phosphate. It catalyses the reaction GTP + succinate + CoA = succinyl-CoA + GDP + phosphate. The protein operates within carbohydrate metabolism; tricarboxylic acid cycle; succinate from succinyl-CoA (ligase route): step 1/1. Functionally, succinyl-CoA synthetase functions in the citric acid cycle (TCA), coupling the hydrolysis of succinyl-CoA to the synthesis of either ATP or GTP and thus represents the only step of substrate-level phosphorylation in the TCA. The beta subunit provides nucleotide specificity of the enzyme and binds the substrate succinate, while the binding sites for coenzyme A and phosphate are found in the alpha subunit. The sequence is that of Succinate--CoA ligase [ADP-forming] subunit beta from Histophilus somni (strain 2336) (Haemophilus somnus).